Consider the following 506-residue polypeptide: Glucan endo-1,3-beta-glucosidase 13 (506 aa).

The N-terminal stretch at 1 to 22 is a signal peptide; it reads MARDFKLIFSISILLLLLDCCY. N-linked (GlcNAc...) asparagine glycosylation is present at N70. E119 functions as the Proton donor in the catalytic mechanism. N-linked (GlcNAc...) asparagine glycans are attached at residues N127, N175, and N212. Residue E264 is the Nucleophile of the active site. N-linked (GlcNAc...) asparagine glycans are attached at residues N356 and N361. Cysteines 370 and 433 form a disulfide. Residues N459 and N465 are each glycosylated (N-linked (GlcNAc...) asparagine). S471 is lipidated: GPI-anchor amidated serine. Residues 472-506 constitute a propeptide, removed in mature form; the sequence is SASTPRGNELLQWILKLCLMISLFFSLQTMNSQAL.

Belongs to the glycosyl hydrolase 17 family. Contains two additional disulfide bonds.

It localises to the secreted. It is found in the cell wall. The protein localises to the cell membrane. It catalyses the reaction Hydrolysis of (1-&gt;3)-beta-D-glucosidic linkages in (1-&gt;3)-beta-D-glucans.. The chain is Glucan endo-1,3-beta-glucosidase 13 from Arabidopsis thaliana (Mouse-ear cress).